The following is a 96-amino-acid chain: Aspartyl/glutamyl-tRNA(Asn/Gln) amidotransferase subunit C (96 aa).

Belongs to the GatC family. In terms of assembly, heterotrimer of A, B and C subunits.

The catalysed reaction is L-glutamyl-tRNA(Gln) + L-glutamine + ATP + H2O = L-glutaminyl-tRNA(Gln) + L-glutamate + ADP + phosphate + H(+). The enzyme catalyses L-aspartyl-tRNA(Asn) + L-glutamine + ATP + H2O = L-asparaginyl-tRNA(Asn) + L-glutamate + ADP + phosphate + 2 H(+). Functionally, allows the formation of correctly charged Asn-tRNA(Asn) or Gln-tRNA(Gln) through the transamidation of misacylated Asp-tRNA(Asn) or Glu-tRNA(Gln) in organisms which lack either or both of asparaginyl-tRNA or glutaminyl-tRNA synthetases. The reaction takes place in the presence of glutamine and ATP through an activated phospho-Asp-tRNA(Asn) or phospho-Glu-tRNA(Gln). The polypeptide is Aspartyl/glutamyl-tRNA(Asn/Gln) amidotransferase subunit C (Sulfurimonas denitrificans (strain ATCC 33889 / DSM 1251) (Thiomicrospira denitrificans (strain ATCC 33889 / DSM 1251))).